Here is a 206-residue protein sequence, read N- to C-terminus: Protein GrpE (206 aa).

The tract at residues 1-64 (MSKKASMHKE…KALEEAQQQA (64 aa)) is disordered. Basic and acidic residues predominate over residues 46 to 58 (SDAKVQELEKALE).

It belongs to the GrpE family. Homodimer.

The protein localises to the cytoplasm. Participates actively in the response to hyperosmotic and heat shock by preventing the aggregation of stress-denatured proteins, in association with DnaK and GrpE. It is the nucleotide exchange factor for DnaK and may function as a thermosensor. Unfolded proteins bind initially to DnaJ; upon interaction with the DnaJ-bound protein, DnaK hydrolyzes its bound ATP, resulting in the formation of a stable complex. GrpE releases ADP from DnaK; ATP binding to DnaK triggers the release of the substrate protein, thus completing the reaction cycle. Several rounds of ATP-dependent interactions between DnaJ, DnaK and GrpE are required for fully efficient folding. This chain is Protein GrpE, found in Prosthecochloris aestuarii (strain DSM 271 / SK 413).